The sequence spans 316 residues: Endochitinase 2 (316 aa).

A signal peptide spans 1–18; that stretch reads EFTTLFLLFSVLLLSASA. The Chitin-binding type-1 domain maps to 19-60; that stretch reads EQCGSQAGGALCASGLCCSKFGWCGNTNDYCGPGNCQSQCPG. Intrachain disulfides connect C21-C36, C30-C42, C35-C49, C54-C58, C87-C150, C162-C170, and C269-C301. The active-site Proton donor is the E132. A propeptide spans 310-316 (removed in mature form, vacuolar targeting); that stretch reads GLLVDTV.

This sequence belongs to the glycosyl hydrolase 19 family. Chitinase class I subfamily.

The protein resides in the vacuole. It carries out the reaction Random endo-hydrolysis of N-acetyl-beta-D-glucosaminide (1-&gt;4)-beta-linkages in chitin and chitodextrins.. Defense against chitin-containing fungal pathogens. This chain is Endochitinase 2 (CHTB2), found in Solanum tuberosum (Potato).